The chain runs to 37 residues: Large ribosomal subunit protein bL36c (37 aa).

It belongs to the bacterial ribosomal protein bL36 family.

It is found in the plastid. The protein resides in the chloroplast. This Phaeodactylum tricornutum (strain CCAP 1055/1) protein is Large ribosomal subunit protein bL36c.